Reading from the N-terminus, the 492-residue chain is MTSSLDTDILLVGGGIMSATLGTLLHQLNPELRITLVELQAEVATESSDGWNNAGTGHAGYCELNYTPQDADGSVPIARALKINAAFEESLQFWAWLVEKGILREPASFINPTPHSSFVWGEKNVAFLRKRHQALRAHHLFADMEYSQDPAVLQQWMPLVMAGRDPSIPVAATRVAYGSDVDFGSLTRQLVQHLQGRPGFKLLTRHAVTGLKQQGSWQVKAVDLSQGKPVEIRAGFVFLGAGGATLPLLQKSAIQEARGYGGFPVSGQWLVCHNPDVIHQHHAKVYGKAPLGAPPMSVPHLDTRIINGKPALLFGPFAGFTTRFLKRGSLLDLVNSVKRSNLKSMLGAGRHHMDLTRYLIGEVFQSHQQRMAALRNFYPLANESEWSLVSAGQRVQIIKQCEHQGGKLEFGTEIVSSADGSLAALLGASPGASTSVPAMLEVLQRCFSPQLQSAAWQERMREMLPSYGQSLIEDAELLRAVRYHTLSRLKLT.

This sequence belongs to the MQO family. FAD serves as cofactor.

It carries out the reaction (S)-malate + a quinone = a quinol + oxaloacetate. The protein operates within carbohydrate metabolism; tricarboxylic acid cycle; oxaloacetate from (S)-malate (quinone route): step 1/1. This chain is Probable malate:quinone oxidoreductase, found in Methylobacillus flagellatus (strain ATCC 51484 / DSM 6875 / VKM B-1610 / KT).